The chain runs to 76 residues: Kappa-actitoxin-Avd4c (76 aa).

A signal peptide spans 1–19 (MNKALFLCLVVLCAAVVFA). Positions 20-31 (AEDLQKAKHAPF) are excised as a propeptide. Intrachain disulfides connect Cys37–Cys72, Cys39–Cys65, and Cys55–Cys73.

Belongs to the sea anemone type 3 (BDS) potassium channel toxin family. In terms of tissue distribution, moderately expressed in the ectodermal tissue from the distal and proximal tentacles, body wall, and oral disk.

The protein localises to the secreted. It is found in the nematocyst. Functionally, blocks Kv3 voltage-gated potassium channels. Reduces blood pressure. The protein is Kappa-actitoxin-Avd4c of Anemonia viridis (Snakelocks anemone).